An 831-amino-acid chain; its full sequence is Prolactin receptor (831 aa).

An N-terminal signal peptide occupies residues 1 to 23 (MKQDLISSVQIILFLPLTTVGLA). At 24–438 (GQSFPGKPKI…QIPNDFRVKD (415 aa)) the chain is on the extracellular side. 4 Fibronectin type-III domains span residues 30–128 (KPKI…VQPG), 129–227 (SPVN…IPSG), 230–331 (PPEK…VQPD), and 332–433 (PPVN…IPND). Residues Cys36 and Cys46 are joined by a disulfide bond. Residue Asn59 is glycosylated (N-linked (GlcNAc...) asparagine). Cys75 and Cys86 are oxidised to a cystine. Residues Asn91, Asn100, Asn112, Asn132, Asn262, Asn303, Asn315, and Asn335 are each glycosylated (N-linked (GlcNAc...) asparagine). Zn(2+)-binding residues include Asp414 and His416. Positions 419-423 (WSEWS) match the WSXWS motif motif. The helical transmembrane segment at 439–459 (MIVWIVLGVLSSLICLIMSWT) threads the bilayer. The Cytoplasmic portion of the chain corresponds to 460–831 (MVLKGYRMIT…DPSSFMPSFK (372 aa)). The Box 1 motif signature appears at 471-479 (MLPPVPGPK). Disordered stretches follow at residues 527-563 (QQLM…SPSL), 774-796 (RVPH…QQGQ), and 808-831 (PSDC…PSFK). A compositionally biased stretch (polar residues) spans 787–796 (ETSQSLQQGQ).

Belongs to the type I cytokine receptor family. Type 1 subfamily.

The protein localises to the membrane. This is a receptor for the anterior pituitary hormone prolactin. This is Prolactin receptor (PRLR) from Gallus gallus (Chicken).